The sequence spans 164 residues: Protein-export protein SecB (164 aa).

The protein belongs to the SecB family. Homotetramer, a dimer of dimers. One homotetramer interacts with 1 SecA dimer.

The protein localises to the cytoplasm. Functionally, one of the proteins required for the normal export of preproteins out of the cell cytoplasm. It is a molecular chaperone that binds to a subset of precursor proteins, maintaining them in a translocation-competent state. It also specifically binds to its receptor SecA. This is Protein-export protein SecB from Shewanella denitrificans (strain OS217 / ATCC BAA-1090 / DSM 15013).